Reading from the N-terminus, the 366-residue chain is Dehydrogenase aclE (366 aa).

Residues 1–19 (MSKRIRLGIVGLSADPSHC) form the signal peptide. N330 carries an N-linked (GlcNAc...) asparagine glycan.

The protein belongs to the Gfo/Idh/MocA family.

The protein operates within mycotoxin biosynthesis. Dehydrogenase; part of the gene cluster that mediates the biosynthesis of aspirochlorine (or antibiotic A30641), an unusual halogenated spiro compound with distinctive antifungal properties due to selective inhibition of protein biosynthesis, and which is also active against bacteria, viruses, and murine tumor cells. The non-ribosomal peptide synthetase (NRPS) aclP is responsible the formation of the diketopiperazine (DKP) core from the condensation of 2 phenylalanine residues. One Phe residue is tailored into chlorotyrosine by hydroxylation and chlorination, whereas the second Phe undergoes an unprecedented C-C bond cleavage to be converted into glycine. After formation of the DKP, sulfur is incorporated into the DKP by conjugation with glutathione by aclG, followed by its stepwise degradation to the thiol by aclI, aclJ and aclK, and the dithiol oxidation by aclT. In addition, oxygenases (aclB, aclC, aclL and aclO) and O-methyltransferases (aclM and aclU) act as tailoring enzymes to produce the intermediate dechloroaspirochlorine. Ultimately, chlorination of dechloroaspirochlorine by the halogenase aclH is the last step in the aspirochlorine pathway. The sequence is that of Dehydrogenase aclE from Aspergillus oryzae (strain ATCC 42149 / RIB 40) (Yellow koji mold).